The following is a 332-amino-acid chain: Apoptosis-enhancing nuclease (332 aa).

The disordered stretch occupies residues 1–102 (MVPREVPESS…VPREAPSSGP (102 aa)). Basic residues predominate over residues 20–36 (ARRRHKRRSRQHQRFMA). A Nucleolar localization signal motif is present at residues 21 to 29 (RRRHKRRSR). Polar residues predominate over residues 63–73 (QTPAGTEASGN). The Exonuclease domain occupies 105–261 (YVAIDCEMVG…EDAMTAMELY (157 aa)). The Nuclear localization signal signature appears at 160–183 (RQHMHKAIPFQVAQKEILKLLKGK). The interval 272-332 (VASTAKAHPE…EGQGARSAPP (61 aa)) is disordered. The span at 310–321 (GDTREAQDRQEG) shows a compositional bias: basic and acidic residues.

The protein resides in the nucleus. It localises to the nucleolus. Exonuclease with activity against single- and double-stranded DNA and RNA. Mediates p53-induced apoptosis. When induced by p53 following DNA damage, digests double-stranded DNA to form single-stranded DNA and amplifies DNA damage signals, leading to enhancement of apoptosis. The polypeptide is Apoptosis-enhancing nuclease (Rattus norvegicus (Rat)).